The chain runs to 316 residues: Aspartate carbamoyltransferase catalytic subunit (316 aa).

Carbamoyl phosphate is bound by residues R59 and T60. L-aspartate is bound at residue K88. Carbamoyl phosphate-binding residues include R109, H137, and Q140. Residues R170 and R232 each coordinate L-aspartate. Positions 269 and 270 each coordinate carbamoyl phosphate.

The protein belongs to the aspartate/ornithine carbamoyltransferase superfamily. ATCase family. Heterooligomer of catalytic and regulatory chains.

It catalyses the reaction carbamoyl phosphate + L-aspartate = N-carbamoyl-L-aspartate + phosphate + H(+). Its pathway is pyrimidine metabolism; UMP biosynthesis via de novo pathway; (S)-dihydroorotate from bicarbonate: step 2/3. Catalyzes the condensation of carbamoyl phosphate and aspartate to form carbamoyl aspartate and inorganic phosphate, the committed step in the de novo pyrimidine nucleotide biosynthesis pathway. In Methanobrevibacter smithii (strain ATCC 35061 / DSM 861 / OCM 144 / PS), this protein is Aspartate carbamoyltransferase catalytic subunit.